The following is a 971-amino-acid chain: Isoleucine--tRNA ligase (971 aa).

The short motif at 64–74 (PYANGHIHIGH) is the 'HIGH' region element. E602 serves as a coordination point for L-isoleucyl-5'-AMP. The 'KMSKS' region motif lies at 643 to 647 (KMSKS). K646 is an ATP binding site.

This sequence belongs to the class-I aminoacyl-tRNA synthetase family. IleS type 1 subfamily. In terms of assembly, monomer.

The protein localises to the cytoplasm. It carries out the reaction tRNA(Ile) + L-isoleucine + ATP = L-isoleucyl-tRNA(Ile) + AMP + diphosphate. Catalyzes the attachment of isoleucine to tRNA(Ile). As IleRS can inadvertently accommodate and process structurally similar amino acids such as valine, to avoid such errors it has two additional distinct tRNA(Ile)-dependent editing activities. One activity is designated as 'pretransfer' editing and involves the hydrolysis of activated Val-AMP. The other activity is designated 'posttransfer' editing and involves deacylation of mischarged Val-tRNA(Ile). This chain is Isoleucine--tRNA ligase, found in Bartonella henselae (strain ATCC 49882 / DSM 28221 / CCUG 30454 / Houston 1) (Rochalimaea henselae).